Here is a 400-residue protein sequence, read N- to C-terminus: NADPH dehydrogenase 2 (400 aa).

FMN-binding residues include Thr38 and Gln115. Residues His192 and Asn195 each contribute to the substrate site. The Proton donor role is filled by Tyr197. Residues Arg244 and Arg349 each contribute to the FMN site. The residue at position 353 (Ser353) is a Phosphoserine. A substrate-binding site is contributed by Tyr376. Position 379 is a phosphoserine (Ser379).

The protein belongs to the NADH:flavin oxidoreductase/NADH oxidase family. Homodimer or heterodimer with OYE3. The cofactor is FMN.

Its subcellular location is the cytoplasm. The protein resides in the nucleus. The protein localises to the mitochondrion. It catalyses the reaction A + NADPH + H(+) = AH2 + NADP(+). Functionally, flavin-dependent enoate reductase that catalyzes the chemo- and stereoslective hydrogenation of electron-poor alkenes. The enzyme is reduced by NADPH, and oxygen, quinones, and alpha,beta-unsaturated aldehydes and ketones can act as electron acceptors to complete catalytic turnover. The physiological oxidant remains elusive. Has an antioxidant activity, reducing reactive oxygen species (ROS) levels when overexpressed. Formation of OYE2-OYE3 heterodimers contribute to the induction of programmed cell death upon oxidative stress. The polypeptide is NADPH dehydrogenase 2 (Saccharomyces cerevisiae (strain ATCC 204508 / S288c) (Baker's yeast)).